Here is a 197-residue protein sequence, read N- to C-terminus: Large ribosomal subunit protein bL25 (197 aa).

The protein belongs to the bacterial ribosomal protein bL25 family. CTC subfamily. In terms of assembly, part of the 50S ribosomal subunit; part of the 5S rRNA/L5/L18/L25 subcomplex. Contacts the 5S rRNA. Binds to the 5S rRNA independently of L5 and L18.

In terms of biological role, this is one of the proteins that binds to the 5S RNA in the ribosome where it forms part of the central protuberance. The sequence is that of Large ribosomal subunit protein bL25 from Caulobacter vibrioides (strain ATCC 19089 / CIP 103742 / CB 15) (Caulobacter crescentus).